The sequence spans 445 residues: Phosphoglucosamine mutase (445 aa).

Serine 102 acts as the Phosphoserine intermediate in catalysis. Residues serine 102, aspartate 241, aspartate 243, and aspartate 245 each coordinate Mg(2+). Residue serine 102 is modified to Phosphoserine.

The protein belongs to the phosphohexose mutase family. Requires Mg(2+) as cofactor. Post-translationally, activated by phosphorylation.

The catalysed reaction is alpha-D-glucosamine 1-phosphate = D-glucosamine 6-phosphate. Catalyzes the conversion of glucosamine-6-phosphate to glucosamine-1-phosphate. This is Phosphoglucosamine mutase from Serratia proteamaculans (strain 568).